A 701-amino-acid chain; its full sequence is Elongation factor G (701 aa).

The region spanning 10–290 is the tr-type G domain; that stretch reads AKVRNIGIMA…AVVDYLPSPL (281 aa). GTP-binding positions include 19–26, 83–87, and 137–140; these read AHIDAGKT, DTPGH, and NKMD.

This sequence belongs to the TRAFAC class translation factor GTPase superfamily. Classic translation factor GTPase family. EF-G/EF-2 subfamily.

The protein localises to the cytoplasm. Functionally, catalyzes the GTP-dependent ribosomal translocation step during translation elongation. During this step, the ribosome changes from the pre-translocational (PRE) to the post-translocational (POST) state as the newly formed A-site-bound peptidyl-tRNA and P-site-bound deacylated tRNA move to the P and E sites, respectively. Catalyzes the coordinated movement of the two tRNA molecules, the mRNA and conformational changes in the ribosome. This Tropheryma whipplei (strain Twist) (Whipple's bacillus) protein is Elongation factor G.